The chain runs to 264 residues: 3-methyl-2-oxobutanoate hydroxymethyltransferase (264 aa).

Residues Asp-45 and Asp-84 each coordinate Mg(2+). Residues 45–46, Asp-84, and Lys-112 each bind 3-methyl-2-oxobutanoate; that span reads DS. Glu-114 is a binding site for Mg(2+). The active-site Proton acceptor is Glu-181.

This sequence belongs to the PanB family. Homodecamer; pentamer of dimers. Requires Mg(2+) as cofactor.

The protein resides in the cytoplasm. It catalyses the reaction 3-methyl-2-oxobutanoate + (6R)-5,10-methylene-5,6,7,8-tetrahydrofolate + H2O = 2-dehydropantoate + (6S)-5,6,7,8-tetrahydrofolate. It participates in cofactor biosynthesis; (R)-pantothenate biosynthesis; (R)-pantoate from 3-methyl-2-oxobutanoate: step 1/2. Functionally, catalyzes the reversible reaction in which hydroxymethyl group from 5,10-methylenetetrahydrofolate is transferred onto alpha-ketoisovalerate to form ketopantoate. The sequence is that of 3-methyl-2-oxobutanoate hydroxymethyltransferase from Shewanella sp. (strain MR-7).